The chain runs to 71 residues: Large ribosomal subunit protein uL29 (71 aa).

The protein belongs to the universal ribosomal protein uL29 family.

The chain is Large ribosomal subunit protein uL29 from Methanocella arvoryzae (strain DSM 22066 / NBRC 105507 / MRE50).